The sequence spans 976 residues: Vacuolar membrane protease (976 aa).

Topologically, residues 1 to 15 (MKLKSVFRSVLKYRK) are cytoplasmic. Residues 16–36 (TNLSLLLLITYSIITLLYIFD) traverse the membrane as a helical segment. At 37–359 (HERYKLNLPK…KFFVISAKTL (323 aa)) the chain is on the vacuolar side. 2 N-linked (GlcNAc...) asparagine glycosylation sites follow: asparagine 96 and asparagine 121. The Zn(2+) site is built by histidine 156 and aspartate 168. Asparagine 189 carries N-linked (GlcNAc...) asparagine glycosylation. The Proton acceptor role is filled by glutamate 200. Glutamate 201 serves as a coordination point for Zn(2+). N-linked (GlcNAc...) asparagine glycans are attached at residues asparagine 212 and asparagine 217. Zn(2+) contacts are provided by glutamate 226 and histidine 300. Residues 360-380 (FYWNCIFLLVSPVVAIGLYLI) traverse the membrane as a helical segment. Topologically, residues 381–392 (SRDRMTWKSHSW) are cytoplasmic. The chain crosses the membrane as a helical span at residues 393–412 (LSWTRFPLSLAAGIIVQKLF). Topologically, residues 413–428 (SNDIIRSNPLTFSRNY) are vacuolar. The chain crosses the membrane as a helical span at residues 429–449 (FWPISAFFTQVIFTSYVLINC). The Cytoplasmic segment spans residues 450 to 461 (SNFFFPCADMKS). Residues 462-482 (LSIIELFIILWTILLFTSKLL) form a helical membrane-spanning segment. The Vacuolar segment spans residues 483 to 496 (YSSDYRYTGLYPLS). The chain crosses the membrane as a helical span at residues 497–517 (IFFLLSTIAAILRLLALALGM). Topologically, residues 518–627 (RTRKRLGREC…NSLKLEYTDY (110 aa)) are cytoplasmic. Positions 528 to 610 (RDHHSNYSSH…PLLKGSNSME (83 aa)) are disordered. Polar residues predominate over residues 549 to 558 (NLEQPQDQFT). Over residues 559–570 (SSQDDQASIQDD) the composition is skewed to low complexity. Residues 582 to 601 (NVDEDHGMDSSSQQHDERVP) show a composition bias toward basic and acidic residues. A helical membrane pass occupies residues 628 to 648 (AWIIQFLLIVPIPSFILFNSV). Residues 649–668 (DVIMDALNHTVQEGSKATFD) lie on the Vacuolar side of the membrane. An N-linked (GlcNAc...) asparagine glycan is attached at asparagine 656. A helical transmembrane segment spans residues 669–689 (VLRFGMVGSILIALPILPFFY). Residues 690 to 692 (KVN) are Cytoplasmic-facing. Residues 693 to 713 (YITISLTALLFLISASKTLLV) traverse the membrane as a helical segment. The Vacuolar segment spans residues 714–976 (HPFTNSNPLK…LVIVKDAIIL (263 aa)). Residues asparagine 768, asparagine 796, asparagine 811, asparagine 866, and asparagine 937 are each glycosylated (N-linked (GlcNAc...) asparagine).

It belongs to the peptidase M28 family. Zn(2+) serves as cofactor.

It localises to the vacuole membrane. In terms of biological role, may be involved in vacuolar sorting and osmoregulation. The sequence is that of Vacuolar membrane protease from Saccharomyces cerevisiae (strain JAY291) (Baker's yeast).